We begin with the raw amino-acid sequence, 213 residues long: Ras-related protein Rab-19 (213 aa).

GTP contacts are provided by Ser24, Val26, Gly27, Lys28, Thr29, Cys30, Asp42, and Thr47. Thr29 is a binding site for Mg(2+). Residues 37–52 (SGIFMDNQQNTIGVDF) carry the Switch 1 motif. Residues Thr47 and Asp70 each coordinate Mg(2+). Residues 72–87 (AGQERFRTITQSYYRS) carry the Switch 2 motif. GTP-binding residues include Gly73, Asn128, Lys129, Asp131, Ser159, Ala160, and Lys161. Residues Cys211 and Cys213 are each lipidated (S-geranylgeranyl cysteine). Residue Cys213 is modified to Cysteine methyl ester.

This sequence belongs to the small GTPase superfamily. Rab family. Mg(2+) serves as cofactor.

The protein localises to the cell membrane. It catalyses the reaction GTP + H2O = GDP + phosphate + H(+). With respect to regulation, regulated by guanine nucleotide exchange factors (GEFs) which promote the exchange of bound GDP for free GTP. Regulated by GTPase activating proteins (GAPs) which increase the GTP hydrolysis activity. Inhibited by GDP dissociation inhibitors (GDIs). Functionally, the small GTPases Rab are key regulators of intracellular membrane trafficking, from the formation of transport vesicles to their fusion with membranes. Rabs cycle between an inactive GDP-bound form and an active GTP-bound form that is able to recruit to membranes different set of downstream effectors directly responsible for vesicle formation, movement, tethering and fusion. The polypeptide is Ras-related protein Rab-19 (rab19) (Xenopus laevis (African clawed frog)).